The sequence spans 289 residues: Complement C1q tumor necrosis factor-related protein 7 (289 aa).

Positions 1–16 (MIVLLYVTSLAICASG) are cleaved as a signal peptide. The disordered stretch occupies residues 36 to 134 (IPGLPGPPGP…GDRGDQGDPG (99 aa)). Positions 38–139 (GLPGPPGPPG…QGDPGLPGVC (102 aa)) constitute a Collagen-like domain. Residues 48–61 (ANGSPGPHGRIGLP) show a composition bias toward low complexity. Over residues 63–76 (RDGRDGRKGEKGEK) the composition is skewed to basic and acidic residues. Low complexity predominate over residues 78–91 (TAGLKGKTGPLGLA). Positions 93–102 (EKGDQGETGK) are enriched in basic and acidic residues. The region spanning 143–279 (SIVLKSAFSV…GFLLYVDTDY (137 aa)) is the C1q domain.

The protein resides in the secreted. The chain is Complement C1q tumor necrosis factor-related protein 7 (C1qtnf7) from Mus musculus (Mouse).